A 302-amino-acid polypeptide reads, in one-letter code: Methionyl-tRNA formyltransferase (302 aa).

108 to 111 (SLLP) provides a ligand contact to (6S)-5,6,7,8-tetrahydrofolate. Residues 276-288 (REGKRPMEPEEFL) are compositionally biased toward basic and acidic residues. The disordered stretch occupies residues 276 to 302 (REGKRPMEPEEFLRGFPLPEGSRAHTA).

This sequence belongs to the Fmt family.

The catalysed reaction is L-methionyl-tRNA(fMet) + (6R)-10-formyltetrahydrofolate = N-formyl-L-methionyl-tRNA(fMet) + (6S)-5,6,7,8-tetrahydrofolate + H(+). Functionally, attaches a formyl group to the free amino group of methionyl-tRNA(fMet). The formyl group appears to play a dual role in the initiator identity of N-formylmethionyl-tRNA by promoting its recognition by IF2 and preventing the misappropriation of this tRNA by the elongation apparatus. The sequence is that of Methionyl-tRNA formyltransferase from Cereibacter sphaeroides (strain ATCC 17029 / ATH 2.4.9) (Rhodobacter sphaeroides).